The chain runs to 220 residues: Fructose-6-phosphate aldolase (220 aa).

Lysine 85 acts as the Schiff-base intermediate with substrate in catalysis.

This sequence belongs to the transaldolase family. Type 3A subfamily. As to quaternary structure, homodecamer.

Its subcellular location is the cytoplasm. It catalyses the reaction beta-D-fructose 6-phosphate = dihydroxyacetone + D-glyceraldehyde 3-phosphate. Its function is as follows. Catalyzes the reversible formation of fructose 6-phosphate from dihydroxyacetone and D-glyceraldehyde 3-phosphate via an aldolization reaction. This is Fructose-6-phosphate aldolase from Salmonella gallinarum (strain 287/91 / NCTC 13346).